Here is a 67-residue protein sequence, read N- to C-terminus: RDGYPLASNGCKFGCSGLGENNPTCNHVCEKKAGSDYGYCYAWTCYCEHVAEGTVLWGDSGTGPCRS.

One can recognise an LCN-type CS-alpha/beta domain in the interval 1–66 (RDGYPLASNG…WGDSGTGPCR (66 aa)). 4 cysteine pairs are disulfide-bonded: Cys11–Cys65, Cys15–Cys40, Cys25–Cys45, and Cys29–Cys47.

As to expression, expressed by the venom gland.

Its subcellular location is the secreted. In terms of biological role, alpha toxins bind voltage-independently at site-3 of sodium channels (Nav) and inhibit the inactivation of the activated channels, thereby blocking neuronal transmission. This toxin binds, in vitro, to sodium channels and inhibits the inactivation of the activated channels. Seems not toxic to mice, crickets and sweet-water shrimps. The polypeptide is Alpha-toxin Cn12 (Centruroides noxius (Mexican scorpion)).